Reading from the N-terminus, the 76-residue chain is ATP synthase subunit 9, mitochondrial (76 aa).

Met1 is modified (N-formylmethionine). 2 helical membrane passes run 14-34 (LASI…AALI) and 52-72 (ILGF…AFLL).

F-type ATP synthases have 2 components, the catalytic core F(1) and the membrane-embedded component F(0), linked together by a central stalk and a peripheral stalk. The central stalk, also called rotor shaft, is often seen as part of F(1). The peripheral stalk is seen as part of F(0). F(0) contains the membrane channel next to the rotor. F-type ATP synthases form dimers but each monomer functions independently in ATP generation. The dimer consists of 17 different polypeptides: ATP1 (subunit alpha, 3 molecules per monomer, part of F(1)), ATP2 (subunit beta, 3 copies per monomer, part of F(1)), ATP3 (subunit gamma, part of the central stalk), ATP4 (subunit b, part of the peripheral stalk), ATP5/OSCP (subunit 5/OSCP, part of the peripheral stalk), ATP6 (subunit a, part of the peripheral stalk), ATP7 (subunit d, part of the peripheral stalk), ATP8 (subunit 8, part of the peripheral stalk), OLI1 (subunit c, part of the rotor, 10 molecules per monomer), ATP14 (subunit h, part of the peripheral stalk), ATP15 (subunit epsilon, part of the central stalk), ATP16 (subunit delta, part of the central stalk), ATP17 (subunit f, part of the peripheral stalk), ATP18 (subunit i/j, part of the peripheral stalk), ATP19 (subunit k, dimer-specific, at interface between monomers), ATP20 (subunit g, at interface between monomers), TIM11 (subunit e, at interface between monomers).

Its subcellular location is the mitochondrion inner membrane. Mitochondrial membrane ATP synthase (F(1)F(0) ATP synthase or Complex V) produces ATP from ADP in the presence of a proton gradient across the membrane which is generated by electron transport complexes of the respiratory chain. F-type ATP synthases consist of two structural domains, F(1) - containing the extramembraneous catalytic core, and F(0) - containing the membrane proton channel, linked together by a central stalk and a peripheral stalk. During catalysis, ATP synthesis in the catalytic domain of F(1) is coupled via a rotary mechanism of the central stalk subunits to proton translocation. Part of the complex F(0) domain. A homomeric c-ring of 10 OLI1/ATP9 subunits is part of the complex rotary element. In Yarrowia lipolytica (strain CLIB 122 / E 150) (Yeast), this protein is ATP synthase subunit 9, mitochondrial.